Reading from the N-terminus, the 225-residue chain is Chlorosome protein J (225 aa).

Residues 1 to 95 (MIIYINDKPC…TIRVLTRAEK (95 aa)) form the 2Fe-2S ferredoxin-type domain. Cys-33, Cys-39, Cys-42, and Cys-77 together coordinate [2Fe-2S] cluster.

It depends on [2Fe-2S] cluster as a cofactor.

Its subcellular location is the chlorosome. Its function is as follows. Could play a direct role in the oxidation or reduction of the quenching species formed in the chlorosome. This Chlorobaculum tepidum (strain ATCC 49652 / DSM 12025 / NBRC 103806 / TLS) (Chlorobium tepidum) protein is Chlorosome protein J (csmJ).